The sequence spans 246 residues: Ubiquinone biosynthesis O-methyltransferase (246 aa).

S-adenosyl-L-methionine-binding residues include R44, G63, D84, and M128.

This sequence belongs to the methyltransferase superfamily. UbiG/COQ3 family.

It catalyses the reaction a 3-demethylubiquinol + S-adenosyl-L-methionine = a ubiquinol + S-adenosyl-L-homocysteine + H(+). It carries out the reaction a 3-(all-trans-polyprenyl)benzene-1,2-diol + S-adenosyl-L-methionine = a 2-methoxy-6-(all-trans-polyprenyl)phenol + S-adenosyl-L-homocysteine + H(+). Its pathway is cofactor biosynthesis; ubiquinone biosynthesis. Its function is as follows. O-methyltransferase that catalyzes the 2 O-methylation steps in the ubiquinone biosynthetic pathway. This chain is Ubiquinone biosynthesis O-methyltransferase, found in Xylella fastidiosa (strain Temecula1 / ATCC 700964).